Consider the following 428-residue polypeptide: Putative FBD-associated F-box protein At5g56390 (428 aa).

In terms of domain architecture, F-box spans Asp2–Ser50. The region spanning Cys344–Ser394 is the FBD domain.

The sequence is that of Putative FBD-associated F-box protein At5g56390 from Arabidopsis thaliana (Mouse-ear cress).